The chain runs to 495 residues: Lysine--tRNA ligase (495 aa).

Glu-406 and Glu-413 together coordinate Mg(2+).

The protein belongs to the class-II aminoacyl-tRNA synthetase family. In terms of assembly, homodimer. Mg(2+) serves as cofactor.

The protein localises to the cytoplasm. It carries out the reaction tRNA(Lys) + L-lysine + ATP = L-lysyl-tRNA(Lys) + AMP + diphosphate. This chain is Lysine--tRNA ligase, found in Leptospira interrogans serogroup Icterohaemorrhagiae serovar copenhageni (strain Fiocruz L1-130).